Here is a 132-residue protein sequence, read N- to C-terminus: Large ribosomal subunit protein bL19 (132 aa).

Belongs to the bacterial ribosomal protein bL19 family.

Its function is as follows. This protein is located at the 30S-50S ribosomal subunit interface and may play a role in the structure and function of the aminoacyl-tRNA binding site. The sequence is that of Large ribosomal subunit protein bL19 from Nitrosomonas europaea (strain ATCC 19718 / CIP 103999 / KCTC 2705 / NBRC 14298).